The chain runs to 341 residues: Cell wall mannoprotein PIR1 (341 aa).

The first 18 residues, 1 to 18 (MQYKKSLVASALVATSLA), serve as a signal peptide directing secretion. The propeptide occupies 19 to 63 (AYAPKDPWSTLTPSATYKGGITDYSSTFGIAVEPIATTASSKAKR). PIR1/2/3 repeat units follow at residues 64 to 82 (AAAISQIGDGQIQATTKTT), 83 to 101 (AAAVSQIGDGQIQATTKTK), 102 to 120 (AAAVSQIGDGQIQATTKTT), 126 to 144 (AAAVSQIGDGQIQATTKTK), 145 to 163 (AAAVSQIGDGQIQATTKTT), 164 to 182 (AAAVSQIGDGQIQATTKTT), 183 to 201 (AAAVSQIGDGQIQATTNTT), and 202 to 220 (VAPVSQITDGQIQATTLTS).

The protein belongs to the PIR protein family. Covalently linked to beta-1,3-glucan of the inner cell wall layer via an alkali-sensitive ester linkage between the gamma-carboxyl group of glutamic acids, arising from specific glutamines within the PIR1/2/3 repeats, and hydroxyl groups of glucoses of beta-1,3-glucan chains. Post-translationally, O-glycosylated. Extensively O-mannosylated.

It localises to the secreted. It is found in the cell wall. Component of the outer cell wall layer. Required for stability of the cell wall and for optimal growth. Required for resistance against several antifungal and cell wall-perturbing agents and for tolerance to heat shock. The sequence is that of Cell wall mannoprotein PIR1 (PIR1) from Saccharomyces cerevisiae (strain YJM789) (Baker's yeast).